A 103-amino-acid polypeptide reads, in one-letter code: Small ribosomal subunit protein uS10 (103 aa).

It belongs to the universal ribosomal protein uS10 family. In terms of assembly, part of the 30S ribosomal subunit.

Its function is as follows. Involved in the binding of tRNA to the ribosomes. This is Small ribosomal subunit protein uS10 from Vibrio campbellii (strain ATCC BAA-1116).